The sequence spans 293 residues: Cyclohexadienyl dehydrogenase (293 aa).

Residues 5–293 (KHIAIIGLGL…ALKTDHDIRP (289 aa)) enclose the Prephenate/arogenate dehydrogenase domain. 6 to 30 (HIAIIGLGLIGSSAARATKAYCPDV) is a binding site for NAD(+).

The protein belongs to the prephenate/arogenate dehydrogenase family. As to quaternary structure, homodimer.

It carries out the reaction L-arogenate + NAD(+) = L-tyrosine + CO2 + NADH. The enzyme catalyses prephenate + NAD(+) = 3-(4-hydroxyphenyl)pyruvate + CO2 + NADH. The protein operates within amino-acid biosynthesis; L-tyrosine biosynthesis; (4-hydroxyphenyl)pyruvate from prephenate (NAD(+) route): step 1/1. It functions in the pathway amino-acid biosynthesis; L-tyrosine biosynthesis; L-tyrosine from L-arogenate (NAD(+) route): step 1/1. Insensitive to feedback inhibition by L-tyrosine. Its function is as follows. Can function as either prephenate dehydrogenase or as arogenate dehydrogenase in the biosynthesis of L-tyrosine. Catalyzes two analogous reactions: converts prephenate to 4-hydroxyphenylpyruvate and transforms L-arogenate to L-tyrosine. Is not able to utilize NADP(+) instead of NAD(+) as cosubstrate. The protein is Cyclohexadienyl dehydrogenase of Zymomonas mobilis subsp. mobilis (strain ATCC 31821 / ZM4 / CP4).